Reading from the N-terminus, the 188-residue chain is dTTP/UTP pyrophosphatase (188 aa).

Asp-70 functions as the Proton acceptor in the catalytic mechanism.

The protein belongs to the Maf family. YhdE subfamily. It depends on a divalent metal cation as a cofactor.

It localises to the cytoplasm. It catalyses the reaction dTTP + H2O = dTMP + diphosphate + H(+). The catalysed reaction is UTP + H2O = UMP + diphosphate + H(+). Functionally, nucleoside triphosphate pyrophosphatase that hydrolyzes dTTP and UTP. May have a dual role in cell division arrest and in preventing the incorporation of modified nucleotides into cellular nucleic acids. This chain is dTTP/UTP pyrophosphatase, found in Clostridium botulinum (strain Eklund 17B / Type B).